Here is a 279-residue protein sequence, read N- to C-terminus: ATP synthase gamma chain (279 aa).

The protein belongs to the ATPase gamma chain family. In terms of assembly, F-type ATPases have 2 components, CF(1) - the catalytic core - and CF(0) - the membrane proton channel. CF(1) has five subunits: alpha(3), beta(3), gamma(1), delta(1), epsilon(1). CF(0) has three main subunits: a, b and c.

The protein localises to the cell membrane. In terms of biological role, produces ATP from ADP in the presence of a proton gradient across the membrane. The gamma chain is believed to be important in regulating ATPase activity and the flow of protons through the CF(0) complex. The sequence is that of ATP synthase gamma chain from Mycoplasma pneumoniae (strain ATCC 29342 / M129 / Subtype 1) (Mycoplasmoides pneumoniae).